The sequence spans 1369 residues: Rho guanine nucleotide exchange factor 10 (1369 aa).

The tract at residues 1 to 106 (MRPPGFLSRA…ETTPVAEPTK (106 aa)) is disordered. Residues 46 to 64 (NNEEEEGEQFDFDSGDEIP) show a composition bias toward acidic residues. A compositionally biased stretch (low complexity) spans 83-100 (EAPAPTGGEDGAGAETTP). A Phosphoserine modification is found at serine 180. The segment at 184–254 (EAETPEVTED…ENSDSEPDEM (71 aa)) is disordered. A compositionally biased stretch (polar residues) spans 196–209 (PNSLSSEEPPTSED). Residues 304–355 (KKQLSHDLTRLKEHYEKKMRDLMASTVGVVEIQQLRQKHELKMQKLVKAAKD) are a coiled coil. Position 379 is a phosphoserine (serine 379). The DH domain maps to 421-608 (VRRYILGSVV…ETLAEKLNER (188 aa)). Disordered stretches follow at residues 1226-1260 (KDKS…LSQG) and 1277-1297 (QKSD…SSSL). Residues 1279–1296 (SDLSSSSGSLSLSHGSSS) show a composition bias toward low complexity. Serine 1287 carries the phosphoserine modification. At glutamine 1338 the chain carries N5-methylglutamine.

In terms of processing, methylated at Gln-1338 by N6AMT1.

Functionally, may play a role in developmental myelination of peripheral nerves. The protein is Rho guanine nucleotide exchange factor 10 (ARHGEF10) of Homo sapiens (Human).